A 252-amino-acid polypeptide reads, in one-letter code: 5-oxoprolinase subunit A (252 aa).

The protein belongs to the LamB/PxpA family. In terms of assembly, forms a complex composed of PxpA, PxpB and PxpC.

It catalyses the reaction 5-oxo-L-proline + ATP + 2 H2O = L-glutamate + ADP + phosphate + H(+). Its function is as follows. Catalyzes the cleavage of 5-oxoproline to form L-glutamate coupled to the hydrolysis of ATP to ADP and inorganic phosphate. This is 5-oxoprolinase subunit A from Mycobacterium avium (strain 104).